The chain runs to 502 residues: Cardiolipin synthase (502 aa).

3 helical membrane-spanning segments follow: residues 7-27, 29-49, and 59-79; these read VAIL…YWGG, LLGI…FVIS, and IAWL…YLLF. PLD phosphodiesterase domains follow at residues 237 to 264 and 415 to 442; these read INFR…GDEY and EKGF…DMRS. Catalysis depends on residues H242, K244, D249, H420, K422, and D427.

Belongs to the phospholipase D family. Cardiolipin synthase subfamily.

Its subcellular location is the cell membrane. It catalyses the reaction 2 a 1,2-diacyl-sn-glycero-3-phospho-(1'-sn-glycerol) = a cardiolipin + glycerol. In terms of biological role, catalyzes the reversible phosphatidyl group transfer from one phosphatidylglycerol molecule to another to form cardiolipin (CL) (diphosphatidylglycerol) and glycerol. The chain is Cardiolipin synthase (cls) from Geobacillus thermodenitrificans (strain NG80-2).